A 447-amino-acid polypeptide reads, in one-letter code: Serine/threonine-protein phosphatase 2A 55 kDa regulatory subunit B delta isoform (447 aa).

WD repeat units follow at residues 26–65 (AEAD…KNRP), 91–132 (EIEE…KRAE), 175–213 (AHTY…RSFN), 224–264 (ELTE…LCDR), 283–321 (EIIS…RPVE), 338–379 (ENDC…DITL), and 414–447 (DFNK…DKMN).

Belongs to the phosphatase 2A regulatory subunit B family. As to quaternary structure, PP2A consists of a common heterodimeric core enzyme, composed of a 36 kDa catalytic subunit (subunit C) and a 65 kDa constant regulatory subunit (PR65 or subunit A), that associates with a variety of regulatory subunits.

The protein localises to the cytoplasm. Functionally, substrate-recognition subunit of protein phosphatase 2A (PP2A) that plays a key role in cell cycle by controlling mitosis entry and exit. The activity of PP2A complexes containing PPP2R2D (PR55-delta) fluctuate during the cell cycle: the activity is high in interphase and low in mitosis. This chain is Serine/threonine-protein phosphatase 2A 55 kDa regulatory subunit B delta isoform (ppp2r2d), found in Danio rerio (Zebrafish).